Here is a 709-residue protein sequence, read N- to C-terminus: Cilia- and flagella-associated protein 91 (709 aa).

Disordered stretches follow at residues 94 to 116 (RAGA…QRTK), 333 to 360 (VEPQ…KPLR), and 690 to 709 (PAAA…ETKE).

It belongs to the CFAP91 family.

Its subcellular location is the cytoplasm. The protein localises to the cytoskeleton. It localises to the flagellum axoneme. Functionally, axoneme-associated protein involved in flagellum motility and central pair positioning. This Trypanosoma brucei brucei (strain 927/4 GUTat10.1) protein is Cilia- and flagella-associated protein 91 (CFAP91).